We begin with the raw amino-acid sequence, 334 residues long: Small ribosomal subunit protein uS2 (334 aa).

Belongs to the universal ribosomal protein uS2 family.

The protein is Small ribosomal subunit protein uS2 of Xanthobacter autotrophicus (strain ATCC BAA-1158 / Py2).